The chain runs to 478 residues: Probable cytosolic Fe-S cluster assembly factor AAEL012261 (478 aa).

[4Fe-4S] cluster is bound by residues Cys-23, Cys-69, Cys-72, Cys-75, Cys-189, Cys-245, Cys-396, and Cys-400.

It belongs to the NARF family.

Functionally, component of the cytosolic iron-sulfur (Fe/S) protein assembly machinery. Required for maturation of extramitochondrial Fe/S proteins. This is Probable cytosolic Fe-S cluster assembly factor AAEL012261 from Aedes aegypti (Yellowfever mosquito).